The primary structure comprises 366 residues: Endogenous Bornavirus-like nucleoprotein 1 (366 aa).

Over residues 1–15 (MSRPRNNPQTSSPQD) the composition is skewed to polar residues. Positions 1 to 22 (MSRPRNNPQTSSPQDSTKDGSS) are disordered.

As to expression, expression detected by RT-PCR in a few cell lines, including OL, HEK293T and MOLT-4. Not observed in HeLa cells.

In terms of biological role, may act as an RNA-binding protein. Highly homologous to the bornavirus nucleocapsid N protein that binds viral RNA and oligomerizes. The protein is Endogenous Bornavirus-like nucleoprotein 1 (EBLN1) of Homo sapiens (Human).